A 258-amino-acid chain; its full sequence is Putative [LysW]-aminoadipate/[LysW]-glutamate kinase (258 aa).

Residues Gly-33–Gly-34, Arg-60, and Asn-164 contribute to the substrate site.

Belongs to the acetylglutamate kinase family. LysZ subfamily.

The protein localises to the cytoplasm. The catalysed reaction is [amino-group carrier protein]-C-terminal-N-(1,4-dicarboxybutan-1-yl)-L-glutamine + ATP = [amino-group carrier protein]-C-terminal-N-(1-carboxy-5-phosphooxy-5-oxopentan-1-yl)-L-glutamine + ADP. The enzyme catalyses [amino-group carrier protein]-C-terminal-gamma-(L-glutamyl)-L-glutamate + ATP = [amino-group carrier protein]-C-terminal-gamma-(5-phospho-L-glutamyl)-L-glutamate + ADP. Its pathway is amino-acid biosynthesis; L-lysine biosynthesis via AAA pathway; L-lysine from L-alpha-aminoadipate (Thermus route): step 2/5. The protein operates within amino-acid biosynthesis; L-arginine biosynthesis. Involved in both the arginine and lysine biosynthetic pathways. Phosphorylates the LysW-bound precursors glutamate (for arginine biosynthesis), respectively alpha-aminoadipate (for lysine biosynthesis). The chain is Putative [LysW]-aminoadipate/[LysW]-glutamate kinase from Caldivirga maquilingensis (strain ATCC 700844 / DSM 13496 / JCM 10307 / IC-167).